We begin with the raw amino-acid sequence, 172 residues long: NADH-ubiquinone oxidoreductase chain 6 (172 aa).

5 consecutive transmembrane segments (helical) span residues 1 to 21, 26 to 48, 52 to 74, 86 to 106, and 147 to 167; these read MTNY…GLAL, IYGG…GFGG, GLMV…TAMA, WFIF…FYLF, and CATW…FIII.

It belongs to the complex I subunit 6 family. As to quaternary structure, core subunit of respiratory chain NADH dehydrogenase (Complex I) which is composed of 45 different subunits.

It localises to the mitochondrion inner membrane. The enzyme catalyses a ubiquinone + NADH + 5 H(+)(in) = a ubiquinol + NAD(+) + 4 H(+)(out). Its function is as follows. Core subunit of the mitochondrial membrane respiratory chain NADH dehydrogenase (Complex I) which catalyzes electron transfer from NADH through the respiratory chain, using ubiquinone as an electron acceptor. Essential for the catalytic activity and assembly of complex I. In Rattus norvegicus (Rat), this protein is NADH-ubiquinone oxidoreductase chain 6.